A 264-amino-acid polypeptide reads, in one-letter code: 3-methyl-2-oxobutanoate hydroxymethyltransferase (264 aa).

2 residues coordinate Mg(2+): Asp45 and Asp84. Residues 45–46, Asp84, and Lys112 each bind 3-methyl-2-oxobutanoate; that span reads DS. A Mg(2+)-binding site is contributed by Glu114. Residue Glu181 is the Proton acceptor of the active site.

This sequence belongs to the PanB family. As to quaternary structure, homodecamer; pentamer of dimers. Requires Mg(2+) as cofactor.

It localises to the cytoplasm. The catalysed reaction is 3-methyl-2-oxobutanoate + (6R)-5,10-methylene-5,6,7,8-tetrahydrofolate + H2O = 2-dehydropantoate + (6S)-5,6,7,8-tetrahydrofolate. It participates in cofactor biosynthesis; (R)-pantothenate biosynthesis; (R)-pantoate from 3-methyl-2-oxobutanoate: step 1/2. Its function is as follows. Catalyzes the reversible reaction in which hydroxymethyl group from 5,10-methylenetetrahydrofolate is transferred onto alpha-ketoisovalerate to form ketopantoate. This chain is 3-methyl-2-oxobutanoate hydroxymethyltransferase, found in Alteromonas mediterranea (strain DSM 17117 / CIP 110805 / LMG 28347 / Deep ecotype).